We begin with the raw amino-acid sequence, 150 residues long: Urease accessory protein UreE (150 aa).

The protein belongs to the UreE family.

Its subcellular location is the cytoplasm. In terms of biological role, involved in urease metallocenter assembly. Binds nickel. Probably functions as a nickel donor during metallocenter assembly. This Staphylococcus epidermidis (strain ATCC 35984 / DSM 28319 / BCRC 17069 / CCUG 31568 / BM 3577 / RP62A) protein is Urease accessory protein UreE.